The following is a 283-amino-acid chain: GTPase Era (283 aa).

Residues 7-175 enclose the Era-type G domain; it reads YCGHVIIVGK…KNIIKSYLPE (169 aa). A G1 region spans residues 15 to 22; that stretch reads GKANVGKS. 15-22 lines the GTP pocket; that stretch reads GKANVGKS. A G2 region spans residues 41-45; it reads NTTQS. The tract at residues 62 to 65 is G3; sequence DTPG. Residues 62–66 and 124–127 each bind GTP; these read DTPGV and NKID. A G4 region spans residues 124–127; that stretch reads NKID. The segment at 154–156 is G5; sequence ISA. The KH type-2 domain maps to 198–283; that stretch reads IREQLILFLG…HLVLWVKDKN (86 aa).

It belongs to the TRAFAC class TrmE-Era-EngA-EngB-Septin-like GTPase superfamily. Era GTPase family. As to quaternary structure, monomer.

Its subcellular location is the cytoplasm. The protein localises to the cell membrane. In terms of biological role, an essential GTPase that binds both GDP and GTP, with rapid nucleotide exchange. Plays a role in 16S rRNA processing and 30S ribosomal subunit biogenesis and possibly also in cell cycle regulation and energy metabolism. In Buchnera aphidicola subsp. Acyrthosiphon pisum (strain Tuc7), this protein is GTPase Era.